Consider the following 1031-residue polypeptide: Serine-repeat antigen protein 6 (1031 aa).

The first 24 residues, 1–24 (MICPIFFLYIINVLFTQYFIKCEG), serve as a signal peptide directing secretion. Asn74 carries N-linked (GlcNAc...) asparagine glycosylation. The segment covering 91–101 (KVVSSSESGKG) has biased composition (low complexity). Residues 91–163 (KVVSSSESGK…TESSSETLNK (73 aa)) are disordered. Over residues 104–139 (VSHTKVTSEGLSDTQPNVTQSVSSSTHTPGSLDSTM) the composition is skewed to polar residues. An N-linked (GlcNAc...) asparagine glycan is attached at Asn120. The segment covering 140-158 (STEQHSSVSQSSLPTESSS) has biased composition (low complexity). The N-linked (GlcNAc...) asparagine glycan is linked to Asn449. Positions 490-567 (TLPSESPSES…GDTNYVYDFD (78 aa)) are disordered. The span at 492-505 (PSESPSESSSKSDS) shows a compositional bias: low complexity. Residues 511–535 (NDKDKNEDKDDMSKNSKEEFKNDDK) are compositionally biased toward basic and acidic residues. Asn544 carries an N-linked (GlcNAc...) asparagine glycan. Low complexity predominate over residues 554-564 (NINNGDTNYVY). Asn573 carries an N-linked (GlcNAc...) asparagine glycan. Cys644 is an active-site residue. N-linked (GlcNAc...) asparagine glycosylation is present at Asn674. Residues His810 and Asn835 contribute to the active site. N-linked (GlcNAc...) asparagine glycans are attached at residues Asn929 and Asn974.

This sequence belongs to the peptidase C1 family. In terms of processing, just prior to merozoite egress from host erythrocytes, proteolytically cleaved by SUB1 to generate the active 75kDa form.

It localises to the parasitophorous vacuole lumen. The protein localises to the parasitophorous vacuole membrane. In terms of biological role, cysteine protease which plays an essential role in merozoite egress from host erythrocytes. May cleave host SPTB/beta spectrin and ANK1/ankyrin-1 which disrupts host erythrocyte actin cytoskeleton and leads to host erythrocyte cell membrane rupture. In Plasmodium falciparum (isolate 3D7), this protein is Serine-repeat antigen protein 6.